Here is a 182-residue protein sequence, read N- to C-terminus: Ribosome-recycling factor (182 aa).

This sequence belongs to the RRF family.

It localises to the cytoplasm. Functionally, responsible for the release of ribosomes from messenger RNA at the termination of protein biosynthesis. May increase the efficiency of translation by recycling ribosomes from one round of translation to another. This Thermosynechococcus vestitus (strain NIES-2133 / IAM M-273 / BP-1) protein is Ribosome-recycling factor.